We begin with the raw amino-acid sequence, 153 residues long: ATP synthase subunit b' (153 aa).

A helical membrane pass occupies residues 23–40 (LMAIQVVALTYILNSLFF).

Belongs to the ATPase B chain family. In terms of assembly, F-type ATPases have 2 components, F(1) - the catalytic core - and F(0) - the membrane proton channel. F(1) has five subunits: alpha(3), beta(3), gamma(1), delta(1), epsilon(1). F(0) has four main subunits: a(1), b(1), b'(1) and c(10-14). The alpha and beta chains form an alternating ring which encloses part of the gamma chain. F(1) is attached to F(0) by a central stalk formed by the gamma and epsilon chains, while a peripheral stalk is formed by the delta, b and b' chains.

The protein localises to the cellular thylakoid membrane. Functionally, f(1)F(0) ATP synthase produces ATP from ADP in the presence of a proton or sodium gradient. F-type ATPases consist of two structural domains, F(1) containing the extramembraneous catalytic core and F(0) containing the membrane proton channel, linked together by a central stalk and a peripheral stalk. During catalysis, ATP synthesis in the catalytic domain of F(1) is coupled via a rotary mechanism of the central stalk subunits to proton translocation. Component of the F(0) channel, it forms part of the peripheral stalk, linking F(1) to F(0). The b'-subunit is a diverged and duplicated form of b found in plants and photosynthetic bacteria. This chain is ATP synthase subunit b', found in Prochlorococcus marinus (strain MIT 9312).